We begin with the raw amino-acid sequence, 543 residues long: Chaperonin GroEL 1 (543 aa).

ATP-binding positions include 29-32 (TLGP), K50, 86-90 (DGTTT), G414, and D493. The disordered stretch occupies residues 524-543 (KEDKGAPAGMGGMPPGGGMY). Over residues 531 to 543 (AGMGGMPPGGGMY) the composition is skewed to gly residues.

The protein belongs to the chaperonin (HSP60) family. As to quaternary structure, forms a cylinder of 14 subunits composed of two heptameric rings stacked back-to-back. Interacts with the co-chaperonin GroES.

Its subcellular location is the cytoplasm. It catalyses the reaction ATP + H2O + a folded polypeptide = ADP + phosphate + an unfolded polypeptide.. Together with its co-chaperonin GroES, plays an essential role in assisting protein folding. The GroEL-GroES system forms a nano-cage that allows encapsulation of the non-native substrate proteins and provides a physical environment optimized to promote and accelerate protein folding. The protein is Chaperonin GroEL 1 of Syntrophobacter fumaroxidans (strain DSM 10017 / MPOB).